Here is a 708-residue protein sequence, read N- to C-terminus: DNA ligase (708 aa).

Residues Asp35–Asp39, Ser84–Leu85, and Glu118 each bind NAD(+). Lys120 functions as the N6-AMP-lysine intermediate in the catalytic mechanism. Arg141, Glu182, Lys303, and Lys327 together coordinate NAD(+). Zn(2+) is bound by residues Cys419, Cys422, Cys437, and Cys443. In terms of domain architecture, BRCT spans Thr628–Gln708.

The protein belongs to the NAD-dependent DNA ligase family. LigA subfamily. Mg(2+) is required as a cofactor. Mn(2+) serves as cofactor.

It catalyses the reaction NAD(+) + (deoxyribonucleotide)n-3'-hydroxyl + 5'-phospho-(deoxyribonucleotide)m = (deoxyribonucleotide)n+m + AMP + beta-nicotinamide D-nucleotide.. In terms of biological role, DNA ligase that catalyzes the formation of phosphodiester linkages between 5'-phosphoryl and 3'-hydroxyl groups in double-stranded DNA using NAD as a coenzyme and as the energy source for the reaction. It is essential for DNA replication and repair of damaged DNA. This chain is DNA ligase, found in Rhizorhabdus wittichii (strain DSM 6014 / CCUG 31198 / JCM 15750 / NBRC 105917 / EY 4224 / RW1) (Sphingomonas wittichii).